The following is a 422-amino-acid chain: Phosphoribosylamine--glycine ligase (422 aa).

Positions 107–313 (KDLMKKYDIP…LVQVLLDLLD (207 aa)) constitute an ATP-grasp domain. Residue 133–194 (VQEKGAPIVI…EEYLSGEEFS (62 aa)) coordinates ATP. Positions 283 and 285 each coordinate Mg(2+).

Belongs to the GARS family. Mg(2+) serves as cofactor. The cofactor is Mn(2+).

The enzyme catalyses 5-phospho-beta-D-ribosylamine + glycine + ATP = N(1)-(5-phospho-beta-D-ribosyl)glycinamide + ADP + phosphate + H(+). Its pathway is purine metabolism; IMP biosynthesis via de novo pathway; N(1)-(5-phospho-D-ribosyl)glycinamide from 5-phospho-alpha-D-ribose 1-diphosphate: step 2/2. In Bacillus subtilis (strain 168), this protein is Phosphoribosylamine--glycine ligase.